The following is a 492-amino-acid chain: Phosphoenolpyruvate carboxylase (492 aa).

The protein belongs to the PEPCase type 2 family. As to quaternary structure, homotetramer. It depends on Mg(2+) as a cofactor.

The catalysed reaction is oxaloacetate + phosphate = phosphoenolpyruvate + hydrogencarbonate. Functionally, catalyzes the irreversible beta-carboxylation of phosphoenolpyruvate (PEP) to form oxaloacetate (OAA), a four-carbon dicarboxylic acid source for the tricarboxylic acid cycle. The protein is Phosphoenolpyruvate carboxylase of Halobacterium salinarum (strain ATCC 29341 / DSM 671 / R1).